A 203-amino-acid chain; its full sequence is ESCRT-related protein CHMP1B (203 aa).

Coiled coils occupy residues 13 to 51 (DLKFTSKSLQRQSRKCEKEEKAEKLKVKKAIEKGNMDGA) and 109 to 140 (GNLQKMSETMDSFEKQFVNMEVQAEFMENAMA). The disordered stretch occupies residues 172 to 203 (PQPAGHAIPTKTEEKVDEDDLSRRLAELKARG). The span at 192 to 203 (LSRRLAELKARG) shows a compositional bias: basic and acidic residues.

Belongs to the SNF7 family. Interacts with CHMP1A and LIP5. Interacts with VPS2.2.

Its subcellular location is the cytoplasm. It localises to the endosome membrane. Functionally, involved in ESCRT-dependent multivesicular body (MVB) formation and sorting of endosomal cargo proteins into MVBs. Mediates the MVB sorting of the auxin carriers PIN1, PIN2 and AUX1. Required for embryonic axis establishment and seedling growth. Required for autophagic degradation of plastid proteins. Promotes the efficient sequestration of cargo from plastids into autophagosomes. Mediates the efficient delivery of autophagic plastid bodies to the vacuole, but not into the cytoplasm. This is ESCRT-related protein CHMP1B from Arabidopsis thaliana (Mouse-ear cress).